A 457-amino-acid chain; its full sequence is Oxygen-independent coproporphyrinogen III oxidase (457 aa).

The region spanning 47–279 is the Radical SAM core domain; it reads LKNPMPLSLY…EILESLISFL (233 aa). Position 56 (Tyr56) interacts with S-adenosyl-L-methionine. [4Fe-4S] cluster-binding residues include Cys62 and Cys66. Phe68 is a binding site for S-adenosyl-L-methionine. Cys69 is a binding site for [4Fe-4S] cluster. S-adenosyl-L-methionine contacts are provided by residues Gly113, 114–115, Glu147, Gln174, Arg186, Asp211, Ala245, and Ile331; that span reads GT.

The protein belongs to the anaerobic coproporphyrinogen-III oxidase family. In terms of assembly, monomer. [4Fe-4S] cluster serves as cofactor.

The protein resides in the cytoplasm. The enzyme catalyses coproporphyrinogen III + 2 S-adenosyl-L-methionine = protoporphyrinogen IX + 2 5'-deoxyadenosine + 2 L-methionine + 2 CO2. The protein operates within porphyrin-containing compound metabolism; protoporphyrin-IX biosynthesis; protoporphyrinogen-IX from coproporphyrinogen-III (AdoMet route): step 1/1. Involved in the heme biosynthesis. Catalyzes the anaerobic oxidative decarboxylation of propionate groups of rings A and B of coproporphyrinogen III to yield the vinyl groups in protoporphyrinogen IX. The chain is Oxygen-independent coproporphyrinogen III oxidase (hemN) from Helicobacter pylori (strain J99 / ATCC 700824) (Campylobacter pylori J99).